We begin with the raw amino-acid sequence, 689 residues long: Glycine--tRNA ligase beta subunit (689 aa).

Belongs to the class-II aminoacyl-tRNA synthetase family. In terms of assembly, tetramer of two alpha and two beta subunits.

It localises to the cytoplasm. It catalyses the reaction tRNA(Gly) + glycine + ATP = glycyl-tRNA(Gly) + AMP + diphosphate. The protein is Glycine--tRNA ligase beta subunit of Salmonella arizonae (strain ATCC BAA-731 / CDC346-86 / RSK2980).